The primary structure comprises 78 residues: Gas vesicle protein A (78 aa).

The alpha helix 1 stretch occupies residues 9 to 19; that stretch reads LAEVLDRVLDK. Residues 23 to 31 form a beta-strand 1 region; sequence VDVWARISL. The beta turn stretch occupies residues 32-34; that stretch reads VGI. The tract at residues 35 to 43 is beta-strand 2; that stretch reads EILTVEARV. Residues 48–67 are alpha helix 2; sequence VDTFLHYAEEIAKIEQAELT.

This sequence belongs to the gas vesicle GvpA family. In terms of assembly, the gas vesicle shell is 2 nm thick and consists of a single layer of this protein. It forms helical ribs nearly perpendicular to the long axis of the vesicle. Modeled as antiparallel homodimers.

Its subcellular location is the gas vesicle shell. Functionally, gas vesicles are hollow, gas filled proteinaceous nanostructures found in some microorganisms. During planktonic growth they allow positioning of the organism at a favorable depth for light or nutrient acquisition. GvpA forms the protein shell. This gene replaces p-gvpA of H.salinarum very poorly, only about 1% of GVs are formed; the few gas vesicles formed are quite strong with a very high critical collapse pressure (CCP) of 0.213 MPa. Expression of a 9.5 kb mc-vac DNA fragment containing 2 divergently transcribed regions (gvpD-gvpE-gvpF-gvpG-gvpH-gvpI-gvpJ-gvpK-gvpL-gvpM and gvpA-gvpC-gvpN-gvpO) allows H.volcanii to produce gas vesicles. The chain is Gas vesicle protein A from Haloferax mediterranei (strain ATCC 33500 / DSM 1411 / JCM 8866 / NBRC 14739 / NCIMB 2177 / R-4) (Halobacterium mediterranei).